The following is a 156-amino-acid chain: ATP synthase subunit b (156 aa).

The chain crosses the membrane as a helical span at residues 11–31 (AIAFVLFVLFCMKYVWPPIMA).

It belongs to the ATPase B chain family. F-type ATPases have 2 components, F(1) - the catalytic core - and F(0) - the membrane proton channel. F(1) has five subunits: alpha(3), beta(3), gamma(1), delta(1), epsilon(1). F(0) has three main subunits: a(1), b(2) and c(10-14). The alpha and beta chains form an alternating ring which encloses part of the gamma chain. F(1) is attached to F(0) by a central stalk formed by the gamma and epsilon chains, while a peripheral stalk is formed by the delta and b chains.

The protein localises to the cell inner membrane. Functionally, f(1)F(0) ATP synthase produces ATP from ADP in the presence of a proton or sodium gradient. F-type ATPases consist of two structural domains, F(1) containing the extramembraneous catalytic core and F(0) containing the membrane proton channel, linked together by a central stalk and a peripheral stalk. During catalysis, ATP synthesis in the catalytic domain of F(1) is coupled via a rotary mechanism of the central stalk subunits to proton translocation. Component of the F(0) channel, it forms part of the peripheral stalk, linking F(1) to F(0). In Cronobacter sakazakii (strain ATCC BAA-894) (Enterobacter sakazakii), this protein is ATP synthase subunit b.